Reading from the N-terminus, the 210-residue chain is Large ribosomal subunit protein uL3 (210 aa).

It belongs to the universal ribosomal protein uL3 family. In terms of assembly, part of the 50S ribosomal subunit. Forms a cluster with proteins L14 and L19.

Functionally, one of the primary rRNA binding proteins, it binds directly near the 3'-end of the 23S rRNA, where it nucleates assembly of the 50S subunit. This is Large ribosomal subunit protein uL3 from Caldicellulosiruptor bescii (strain ATCC BAA-1888 / DSM 6725 / KCTC 15123 / Z-1320) (Anaerocellum thermophilum).